Consider the following 219-residue polypeptide: Sugar transporter SWEET1 (219 aa).

7 consecutive transmembrane segments (helical) span residues 3–23 (FLQL…TTGL), 38–58 (VQFL…YYGL), 63–83 (GTVI…IATY), 98–118 (LLMV…ISPG), 125–145 (LGLT…ADLL), 156–176 (LSFS…LYGL), and 189–209 (PGIF…AVIP). Residues 5-90 (QLLSCACIIF…ATYCHYTKEK (86 aa)) form the MtN3/slv 1 domain. The MtN3/slv 2 domain occupies 124 to 204 (QLGLTCSVFT…LIRFFLFWWF (81 aa)).

It belongs to the SWEET sugar transporter family.

The protein localises to the golgi apparatus membrane. The protein resides in the cell membrane. Functionally, mediates sugar transport across membranes. In Danio rerio (Zebrafish), this protein is Sugar transporter SWEET1 (slc50a1).